The chain runs to 91 residues: Early E3B 10.4 kDa protein (91 aa).

A signal peptide spans 1–22 (MIPRVLILLTLVALFCACSTLA). At 23–34 (AVAHIEVDCIPP) the chain is on the lumenal side. The chain crosses the membrane as a helical span at residues 35–60 (FTVYLLYGFVTLILICSLVTVVIAFI). The Cytoplasmic portion of the chain corresponds to 61-91 (QFIDWICVRIAYLRHHPQYRDRTIADLLRIL).

It belongs to the adenoviridae E3B family.

Its subcellular location is the host endoplasmic reticulum membrane. Its function is as follows. Down-regulates the EGF receptor. The protein is Early E3B 10.4 kDa protein of Homo sapiens (Human).